A 1185-amino-acid polypeptide reads, in one-letter code: Adhesion G-protein coupled receptor G6 (1185 aa).

Residues 1 to 32 form the signal peptide; it reads MISFISGRWWRWKFQNTLAVFLLLICLSTSVA. Topologically, residues 33 to 849 are extracellular; that stretch reads QSCQSSTSCN…AELIDEKNNR (817 aa). Cys41 and Cys67 are joined by a disulfide. The CUB domain maps to 41-149; the sequence is CNVVLTDSQG…KGFHISYKQV (109 aa). Residues 41–354 are mediates interaction with type IV collagen; sequence CNVVLTDSQG…SSTQTDSTLS (314 aa). Positions 41–839 are inhibits receptor signaling in absence of type IV collagen; that stretch reads CNVVLTDSQG…FGILMDVSRA (799 aa). Asn68 carries an N-linked (GlcNAc...) asparagine glycan. The Ca(2+) site is built by Glu89 and Asp97. Cys94 and Cys111 form a disulfide bridge. N-linked (GlcNAc...) asparagine glycosylation is present at Asn121. Residues Asp134, Ser136, and Val137 each contribute to the Ca(2+) site. Residues 154 to 355 enclose the Pentraxin (PTX) domain; that stretch reads RNQKVTMPKS…STQTDSTLSC (202 aa). 3 disulfides stabilise this stretch: Cys185–Cys248, Cys229–Cys271, and Cys369–Cys375. Residues Asn395, Asn429, Asn470, Asn539, Asn550, Asn562, Asn565, Asn613, Asn680, Asn691, Asn719, Asn763, Asn799, and Asn818 are each glycosylated (N-linked (GlcNAc...) asparagine). 2 disulfide bridges follow: Cys508–Cys544 and Cys532–Cys563. The GAIN-B domain maps to 658–840; sequence PSLTISSKNL…GILMDVSRAA (183 aa). 2 disulfides stabilise this stretch: Cys790/Cys822 and Cys809/Cys824. The interval 790–840 is GPS; the sequence is CVFWDFNLQNYSGGCNSDGCKVGSDSNSNRTVCLCNHLTHFGILMDVSRAA. Residues 829-837 are stachel; it reads HFGILMDVS. A helical membrane pass occupies residues 850–870; that stretch reads VLTFITYIGCGISAIFSAATL. The Cytoplasmic segment spans residues 871-886; that stretch reads LTYIAFEKLRRDYPSK. Residues 887–907 form a helical membrane-spanning segment; sequence ILMNLSTSLLFLNMVFLLDGW. At 908 to 915 the chain is on the extracellular side; it reads LASYEIKE. Residues 916–936 form a helical membrane-spanning segment; sequence LCVTVAVFLHFFLLTSFTWMG. At 937 to 957 the chain is on the cytoplasmic side; sequence LESIHMYIALVKVFNTYIRRY. A helical membrane pass occupies residues 958 to 978; that stretch reads ILKFCIVGWGVPAAIVGIVLA. Residues 979–1013 are Extracellular-facing; sequence VSKDSYGKNYYGKGKDGQGTSEFCWILNPVVFYVT. A helical transmembrane segment spans residues 1014–1034; sequence CVAYFSIIFLMNVAMFIVVMI. The Cytoplasmic portion of the chain corresponds to 1035-1057; the sequence is QICGRNGKRSNRTLREDILRNLR. The chain crosses the membrane as a helical span at residues 1058-1080; that stretch reads SVVSLTFLLGMTWGFAFFAWGPV. At 1081-1083 the chain is on the extracellular side; it reads SLA. A helical membrane pass occupies residues 1084–1106; it reads FMYLFTIFNSLQGLFIFVFHCAL. Residue Asn1092 coordinates 17alpha-hydroxyprogesterone. Over 1107–1185 the chain is Cytoplasmic; the sequence is KENVQKQWRR…RHSNADSTLQ (79 aa). The segment at 1138 to 1160 is disordered; it reads NTKKVSSDNLGKSLSSSSFGSTT. Low complexity predominate over residues 1144–1158; the sequence is SDNLGKSLSSSSFGS.

Belongs to the G-protein coupled receptor 2 family. Adhesion G-protein coupled receptor (ADGR) subfamily. In terms of processing, autoproteolytically processed at the GPS region of the GAIN-B domain; this cleavage modulates receptor activity. Expressed in Schwann cells of the posterior lateral line nerve and in brain.

It is found in the cell membrane. Its activity is regulated as follows. Forms a heterodimer of 2 chains generated by proteolytic processing that remain associated through non-covalent interactions mediated by the GAIN-B domain. In the inactivated receptor, the Stachel sequence (also named stalk) is embedded in the GAIN-B domain, where it adopts a beta-strand conformation. On activation, the Stachel moves into the 7 transmembrane region and adopts a twisted hook-shaped configuration that forms contacts within the receptor, leading to coupling of a G-alpha protein, which activates signaling. The cleaved GAIN-B and N-terminal domains can then dissociate from the rest of the receptor. In terms of biological role, adhesion G-protein coupled receptor (aGPCR) for steroid hormones, such as progesterone and 17alpha-hydroxyprogesterone (17OHP). Ligand binding causes a conformation change that triggers signaling via guanine nucleotide-binding proteins (G proteins) and modulates the activity of downstream effectors, such as adenylate cyclase. Adgrg6 is coupled to G(i) G alpha proteins and mediates inhibition of adenylate cyclase. Also able to couple to G(q) G proteins. Involved in myelination of the peripheral nervous system: required for differentiation of promyelinating Schwann cells and for normal myelination of axons. G-protein coupled receptor activity can also be activated by type IV collagen, a major constituent of the basement membrane. Also plays a role inner ear development. The chain is Adhesion G-protein coupled receptor G6 (adgrg6) from Danio rerio (Zebrafish).